Consider the following 245-residue polypeptide: Ribosomal RNA small subunit methyltransferase G (245 aa).

S-adenosyl-L-methionine contacts are provided by residues glycine 79, phenylalanine 84, 130–131, and arginine 150; that span reads AE.

It belongs to the methyltransferase superfamily. RNA methyltransferase RsmG family.

It is found in the cytoplasm. Functionally, specifically methylates the N7 position of a guanine in 16S rRNA. In Limosilactobacillus fermentum (strain NBRC 3956 / LMG 18251) (Lactobacillus fermentum), this protein is Ribosomal RNA small subunit methyltransferase G.